The sequence spans 381 residues: Guanine nucleotide-binding protein G(olf) subunit alpha (381 aa).

Residues methionine 1 to asparagine 25 form a disordered region. Residue glycine 2 is the site of N-palmitoyl glycine attachment. Cysteine 3 is lipidated: S-palmitoyl cysteine. Residues threonine 10–asparagine 25 are compositionally biased toward basic and acidic residues. The G-alpha domain maps to alanine 41–leucine 381. The tract at residues arginine 44 to threonine 57 is G1 motif. 6 residues coordinate GTP: glutamate 52, serine 53, glycine 54, lysine 55, serine 56, and threonine 57. Serine 56 serves as a coordination point for Mg(2+). Residue threonine 178 is modified to Phosphothreonine. Positions aspartate 183 to threonine 191 are G2 motif. The GTP site is built by leucine 185 and arginine 186. Position 188 is an ADP-ribosylarginine; by cholera toxin (arginine 188). Threonine 191 is a binding site for GTP. Threonine 191 and aspartate 210 together coordinate Mg(2+). The G3 motif stretch occupies residues phenylalanine 206–arginine 215. Residues glycine 213, asparagine 279, lysine 280, aspartate 282, and alanine 353 each contribute to the GTP site. The G4 motif stretch occupies residues isoleucine 275–aspartate 282. Positions threonine 351–threonine 356 are G5 motif.

This sequence belongs to the G-alpha family. G(s) subfamily. G proteins are composed of 3 units; alpha, beta and gamma. The alpha chain contains the guanine nucleotide binding site. Interacts with GAS2L2. Interacts (GDP-bound form) with RIC8B (via C-terminus); promoting GNAL folding and association with the plasma membrane. As to expression, detected in olfactory neuroepithelium, brain, testis, and to a lower extent in retina, lung alveoli, spleen. Trace amounts where seen in kidney, adrenal gland and liver. Found to be expressed in all the insulinomas examined.

The protein resides in the cell membrane. The catalysed reaction is GTP + H2O = GDP + phosphate + H(+). Functionally, guanine nucleotide-binding protein (G protein) involved as transducer in olfactory signal transduction controlled by G protein-coupled receptors (GPCRs). Contains the guanine nucleotide binding site and alternates between an active, GTP-bound state and an inactive, GDP-bound state. Signaling by an activated GPCR promotes GDP release and GTP binding. The alpha subunit has a low GTPase activity that converts bound GTP to GDP, thereby terminating the signal. Both GDP release and GTP hydrolysis are modulated by numerous regulatory proteins. GNAL/G(olf) alpha specifically mediates olfactory signal transduction within the olfactory neuroepithelium and the basal ganglia following GPCRs activation. Acts by promoting the specific activation of adenylyl cyclase ADCY3, resulting in increased levels of the signaling molecule cAMP. In Homo sapiens (Human), this protein is Guanine nucleotide-binding protein G(olf) subunit alpha.